The primary structure comprises 270 residues: Cross-pathway control protein 1 (270 aa).

Disordered stretches follow at residues 114–135 and 153–213; these read QAQA…QTQP and QTVH…IIVE. A compositionally biased stretch (low complexity) spans 184-195; the sequence is SVSPPSGRHSSV. Residues 216 to 270 enclose the bZIP domain; that stretch reads SDVVAMKRARNTLAARKSRERKAQRLEELEAKIEELIAERDRWKNLALAHGASTE. Positions 222–240 are basic motif; the sequence is KRARNTLAARKSRERKAQR. Residues 241-248 form a leucine-zipper region; sequence LEELEAKI.

It belongs to the bZIP family. GCN4 subfamily. As to quaternary structure, binds DNA as a dimer.

It is found in the nucleus. Functionally, in N.crassa grown under amino acid starvation conditions, this protein is required for increasing the transcription of the genes coding for many amino acid biosynthetic pathways enzymes. This transcription factor binds and recognize the DNA sequence: 5'-TGACTC-3'. The chain is Cross-pathway control protein 1 (cpc-1) from Neurospora crassa (strain ATCC 24698 / 74-OR23-1A / CBS 708.71 / DSM 1257 / FGSC 987).